The chain runs to 281 residues: ATP synthase gamma chain (281 aa).

The protein belongs to the ATPase gamma chain family. As to quaternary structure, F-type ATPases have 2 components, CF(1) - the catalytic core - and CF(0) - the membrane proton channel. CF(1) has five subunits: alpha(3), beta(3), gamma(1), delta(1), epsilon(1). CF(0) has three main subunits: a, b and c.

It is found in the cell membrane. Its function is as follows. Produces ATP from ADP in the presence of a proton gradient across the membrane. The gamma chain is believed to be important in regulating ATPase activity and the flow of protons through the CF(0) complex. The sequence is that of ATP synthase gamma chain from Clostridium pasteurianum.